Consider the following 347-residue polypeptide: Glycerol-1-phosphate dehydrogenase [NAD(P)+] (347 aa).

Residues 94–98 and 116–119 contribute to the NAD(+) site; these read GKVID and TAAS. Residue D121 coordinates substrate. Residue S125 participates in NAD(+) binding. A substrate-binding site is contributed by D168. Residues D168 and H248 each contribute to the Zn(2+) site. A substrate-binding site is contributed by H252. H264 is a binding site for Zn(2+).

Belongs to the glycerol-1-phosphate dehydrogenase family. Homooctamer. Zn(2+) serves as cofactor.

Its subcellular location is the cytoplasm. The enzyme catalyses sn-glycerol 1-phosphate + NAD(+) = dihydroxyacetone phosphate + NADH + H(+). It catalyses the reaction sn-glycerol 1-phosphate + NADP(+) = dihydroxyacetone phosphate + NADPH + H(+). Its pathway is membrane lipid metabolism; glycerophospholipid metabolism. Its activity is regulated as follows. Partially inhibited by divalent metal cations such as Co(2+), Cu(2+) and Ni(2+). Catalyzes the NAD(P)H-dependent reduction of dihydroxyacetonephosphate (DHAP or glycerone phosphate) to glycerol 1-phosphate (G1P). The G1P thus generated is used as the glycerophosphate backbone of phospholipids in the cellular membranes of Archaea. Is also able to catalyze the reverse reaction, i.e. the NAD(P)(+)-dependent oxidation of G1P but not of G3P. Is not active toward glycerol, dihydroxyacetone, glyceraldehyde-3-phosphate, glyceraldehyde and glycerol-2-phosphate. This Methanothermobacter thermautotrophicus (strain ATCC 29096 / DSM 1053 / JCM 10044 / NBRC 100330 / Delta H) (Methanobacterium thermoautotrophicum) protein is Glycerol-1-phosphate dehydrogenase [NAD(P)+] (egsA).